A 429-amino-acid chain; its full sequence is Adenylosuccinate synthetase (429 aa).

Residues 12-18 (GDEGKGK) and 40-42 (GHT) each bind GTP. The Proton acceptor role is filled by Asp-13. Asp-13 and Gly-40 together coordinate Mg(2+). Residues 13-16 (DEGK), 38-41 (NAGH), Thr-128, Arg-142, Gln-223, Thr-238, and Arg-302 contribute to the IMP site. The Proton donor role is filled by His-41. A substrate-binding site is contributed by 298–304 (VNTGRPR). GTP-binding positions include Arg-304, 330–332 (KLD), and 412–414 (GVG).

Belongs to the adenylosuccinate synthetase family. Homodimer. Mg(2+) serves as cofactor.

Its subcellular location is the cytoplasm. It catalyses the reaction IMP + L-aspartate + GTP = N(6)-(1,2-dicarboxyethyl)-AMP + GDP + phosphate + 2 H(+). Its pathway is purine metabolism; AMP biosynthesis via de novo pathway; AMP from IMP: step 1/2. Functionally, plays an important role in the de novo pathway of purine nucleotide biosynthesis. Catalyzes the first committed step in the biosynthesis of AMP from IMP. The chain is Adenylosuccinate synthetase from Paenarthrobacter aurescens (strain TC1).